A 658-amino-acid polypeptide reads, in one-letter code: ATP-dependent zinc metalloprotease FtsH 4 (658 aa).

A disordered region spans residues 1–22 (MREPTNRQGSPGPGEPRPPAQG). At 1-28 (MREPTNRQGSPGPGEPRPPAQGRPRFPT) the chain is on the cytoplasmic side. The chain crosses the membrane as a helical span at residues 29-49 (WILWVALLALALWNVYTFFWP). Residues 50 to 149 (SSGARLNIPY…TVKIDQAGGS (100 aa)) lie on the Extracellular side of the membrane. The segment at 95 to 114 (QVLSPGDPVPPGTSPNEIRT) is disordered. The chain crosses the membrane as a helical span at residues 150-170 (VWPSLLATIVPLFLFIGLMVY). The Cytoplasmic segment spans residues 171–658 (LGRSMSRGQQ…AAPAAAADSV (488 aa)). 243–250 (GPPGTGKT) contributes to the ATP binding site. Position 464 (His464) interacts with Zn(2+). The active site involves Glu465. Zn(2+) is bound by residues His468 and Asp540.

In the central section; belongs to the AAA ATPase family. This sequence in the C-terminal section; belongs to the peptidase M41 family. In terms of assembly, homohexamer. Zn(2+) serves as cofactor.

The protein resides in the cell membrane. Its function is as follows. Acts as a processive, ATP-dependent zinc metallopeptidase for both cytoplasmic and membrane proteins. Plays a role in the quality control of integral membrane proteins. In Sphaerobacter thermophilus (strain ATCC 49802 / DSM 20745 / KCCM 41009 / NCIMB 13125 / S 6022), this protein is ATP-dependent zinc metalloprotease FtsH 4 (ftsh4).